The sequence spans 615 residues: Coagulation factor XII (615 aa).

An N-terminal signal peptide occupies residues M1 to S19. One can recognise a Fibronectin type-II domain in the interval V42–E90. Intrachain disulfides connect C47–C73, C61–C88, C98–C110, C104–C119, C121–C130, C135–C163, C161–C170, C178–C189, C183–C198, C200–C209, C217–C295, C238–C277, and C266–C290. One can recognise an EGF-like 1 domain in the interval V94–Q131. The O-linked (Fuc) threonine glycan is linked to T109. Residues E133–L173 enclose the Fibronectin type-I domain. The EGF-like 2 domain maps to A174–D210. In terms of domain architecture, Kringle spans C217 to C295. The N-linked (GlcNAc...) asparagine glycan is linked to N249. Residues P298–C359 are disordered. O-linked (GalNAc...) threonine glycans are attached at residues T299 and T305. S308 carries O-linked (GalNAc...) serine glycosylation. Positions P317–Q326 are enriched in pro residues. Residues P327–P338 show a composition bias toward low complexity. 3 O-linked (GalNAc...) threonine glycosylation sites follow: T328, T329, and T337. Disulfide bonds link C359-C486, C397-C413, C405-C475, C436-C439, C500-C569, C532-C548, and C559-C590. The 242-residue stretch at V373–V614 folds into the Peptidase S1 domain. H412 (charge relay system) is an active-site residue. N-linked (GlcNAc...) asparagine glycosylation is present at N433. D461 acts as the Charge relay system in catalysis. The active-site Charge relay system is S563.

The protein belongs to the peptidase S1 family. In terms of assembly, interacts with HRG; the interaction, which is enhanced in the presence of zinc ions and inhibited by heparin-binding, inhibits factor XII autoactivation and contact-initiated coagulation. Interacts (inactive and activated) with D7L2, an anticoagulant protein from Anopheles gambiae. Interacts (activated) with iripin-8, a serine protease inhibitor from Ixodes ricinus saliva. Interacts (inactive and activated) (via amino acids 1-77) with triafestin-1 and triafestin-2, anticoagulant proteins from Triatoma infestans. Interacts (inactive and activated) (via amino acids 1-77) with short form salivary protein D7R1, an anticoagulant protein from Anopheles stephensi. Interacts (inactive and activated) (via fibronectin type II domain) with haemaphysalin, an anticoagulant protein from Haemaphysalis longicornis. Factor XII is activated by kallikrein in alpha-factor XIIa, which is further converted by trypsin into beta-factor XIIa. Alpha-factor XIIa is composed of an NH2-terminal heavy chain, called coagulation factor XIIa heavy chain, and a COOH-terminal light chain, called coagulation factor XIIa light chain, connected by a disulfide bond. Beta-factor XIIa is composed of 2 chains linked by a disulfide bond, an N-terminal nonapeptide, called beta-factor XIIa part 1, and coagulation factor XIIa light chain, also known in this context as beta-factor XIIa part 2. Post-translationally, O- and N-glycosylated. The O-linked polysaccharides were not identified, but are probably the mucin type linked to GalNAc.

Its subcellular location is the secreted. It catalyses the reaction Selective cleavage of Arg-|-Ile bonds in factor VII to form factor VIIa and factor XI to form factor XIa.. Its activity is regulated as follows. Activity is promoted in the presence of negatively charged surfaces. Its function is as follows. Factor XII is a serum glycoprotein that participates in the initiation of blood coagulation, fibrinolysis, and the generation of bradykinin and angiotensin. Prekallikrein is cleaved by factor XII to form kallikrein, which then cleaves factor XII first to alpha-factor XIIa and then trypsin cleaves it to beta-factor XIIa. Alpha-factor XIIa activates factor XI to factor XIa. This Homo sapiens (Human) protein is Coagulation factor XII (F12).